Reading from the N-terminus, the 189-residue chain is Cytidylate kinase (189 aa).

Glycine 7–serine 15 lines the ATP pocket.

It belongs to the cytidylate kinase family. Type 2 subfamily.

Its subcellular location is the cytoplasm. The catalysed reaction is CMP + ATP = CDP + ADP. It carries out the reaction dCMP + ATP = dCDP + ADP. In Saccharolobus islandicus (strain L.S.2.15 / Lassen #1) (Sulfolobus islandicus), this protein is Cytidylate kinase.